We begin with the raw amino-acid sequence, 53 residues long: Small, acid-soluble spore protein K (53 aa).

The disordered stretch occupies residues 1 to 53 (MRNKAHNFPNQNNNKLEGEPRAKAEYASKRADGTTNTHPQERMRASGERSDFF). 2 stretches are compositionally biased toward basic and acidic residues: residues 16–32 (LEGE…KRAD) and 39–53 (PQER…SDFF).

This sequence belongs to the SspK family.

It is found in the spore core. This Geobacillus kaustophilus (strain HTA426) protein is Small, acid-soluble spore protein K.